The primary structure comprises 140 residues: Small ribosomal subunit protein uS12 (140 aa).

Asp-102 carries the post-translational modification 3-methylthioaspartic acid.

This sequence belongs to the universal ribosomal protein uS12 family. In terms of assembly, part of the 30S ribosomal subunit. Contacts proteins S8 and S17. May interact with IF1 in the 30S initiation complex.

In terms of biological role, with S4 and S5 plays an important role in translational accuracy. Functionally, interacts with and stabilizes bases of the 16S rRNA that are involved in tRNA selection in the A site and with the mRNA backbone. Located at the interface of the 30S and 50S subunits, it traverses the body of the 30S subunit contacting proteins on the other side and probably holding the rRNA structure together. The combined cluster of proteins S8, S12 and S17 appears to hold together the shoulder and platform of the 30S subunit. This is Small ribosomal subunit protein uS12 from Bacillus anthracis (strain A0248).